We begin with the raw amino-acid sequence, 319 residues long: G-protein coupled receptor 171 (319 aa).

The Extracellular segment spans residues 1–21; it reads MTNSSTFCPVYRDLEPFTYFF. N-linked (GlcNAc...) asparagine glycosylation is present at N3. The helical transmembrane segment at 22–42 threads the bilayer; that stretch reads YLVFLIGIIGSCFATWAFIQK. The Cytoplasmic portion of the chain corresponds to 43–48; the sequence is TTNHRC. Residues 49-69 traverse the membrane as a helical segment; that stretch reads VSIYLINLLTADFLLTLALPV. Residues 70-89 are Extracellular-facing; the sequence is KIIVDLGVAPWKLRIFHCQV. The chain crosses the membrane as a helical span at residues 90-110; the sequence is TACLIYINMYLSIIFLAFVSI. At 111 to 132 the chain is on the cytoplasmic side; it reads DRCLQLIHSCKIYRIQEPGFAK. The chain crosses the membrane as a helical span at residues 133-153; that stretch reads MISAVVWLMVLLIMVPNMVIP. The Extracellular segment spans residues 154 to 181; that stretch reads IKDIKEKSNVGCMEFKKEFGRNWHLLTN. Residues 182–202 traverse the membrane as a helical segment; the sequence is FICVAIFLNFSVIILISNFLA. At 203-224 the chain is on the cytoplasmic side; it reads IRQLYRNRDNTNYPSVKSALLH. Residues 225–245 traverse the membrane as a helical segment; the sequence is ILLVTASYIICFVPYHAVRIP. The Extracellular segment spans residues 246–268; it reads YTLSQTEVISDCSTRIALFKAKE. Residues 269–289 form a helical membrane-spanning segment; sequence ATLLLAVSNLCFDPILYYHLS. The Cytoplasmic segment spans residues 290–319; that stretch reads KAFRLKVTETFASPKKSKPLEERLRSENDV.

The protein belongs to the G-protein coupled receptor 1 family. Highly expressed in hypothalamus, including the arcuate nucleus, paraventricular nucleus and dorsomedial hypothalamus. Expressed in periaqueductal gray (at protein level), found primarily in GABAergic neurons and to a lesser extent in glutamatergic neurons. Expressed in T cells and natural killer cells.

It localises to the cell membrane. G-protein coupled receptor for Big LEN, a 16-amino acid neuropeptide produced from the precursor protein, proSAAS (encoded by PCSK1N). Acts through a G(i)-alpha-mediated pathway in response to Big LEN. Big LEN-GPR171 system plays an important role in regulating feeding and metabolism. Also plays a role in modulating fear and anxiety-like behaviors in the basolateral amygdala. Big LEN-GPR171 modulates the mu-type opioid receptor signaling and antinociception. Acts as a negative regulator T cell function. The protein is G-protein coupled receptor 171 (Gpr171) of Mus musculus (Mouse).